Reading from the N-terminus, the 83-residue chain is Kunitz-type serine protease inhibitor textilinin-1 (83 aa).

A signal peptide spans 1–24; sequence MSSGGLLLLLGLLTLWEVLTPVSS. Residues 31 to 81 form the BPTI/Kunitz inhibitor domain; that stretch reads CELPADTGPCRVRFPSFYYNPDEKKCLEFIYGGCEGNANNFITKEECESTC. 3 disulfides stabilise this stretch: Cys-31-Cys-81, Cys-40-Cys-64, and Cys-56-Cys-77.

The protein belongs to the venom Kunitz-type family. As to expression, expressed by the venom gland.

It is found in the secreted. Functionally, strongly inhibits plasmin (Ki=0.44 nM) and trypsin (Ki=0.42 nM). Has little effect on plasma (Ki=1870 nM) and tissue (Ki=12900 nM) kallikreins. Its plasmin-inhibiting activity makes it an antifibrinolytic agent. In vivo, reduces blood loss in a mouse tail vein bleeding model. The protein is Kunitz-type serine protease inhibitor textilinin-1 of Pseudonaja textilis textilis (Eastern brown snake).